The primary structure comprises 392 residues: Queuine tRNA-ribosyltransferase (392 aa).

Aspartate 92 acts as the Proton acceptor in catalysis. Substrate is bound by residues 92–96 (DSGGF), aspartate 146, glutamine 188, and glycine 215. Positions 246-252 (GVGSPED) are RNA binding. Catalysis depends on aspartate 265, which acts as the Nucleophile. The segment at 270–274 (TRLGR) is RNA binding; important for wobble base 34 recognition. Zn(2+) is bound by residues cysteine 303, cysteine 305, cysteine 308, and histidine 334.

This sequence belongs to the queuine tRNA-ribosyltransferase family. As to quaternary structure, homodimer. Within each dimer, one monomer is responsible for RNA recognition and catalysis, while the other monomer binds to the replacement base PreQ1. Zn(2+) serves as cofactor.

The catalysed reaction is 7-aminomethyl-7-carbaguanine + guanosine(34) in tRNA = 7-aminomethyl-7-carbaguanosine(34) in tRNA + guanine. It functions in the pathway tRNA modification; tRNA-queuosine biosynthesis. Catalyzes the base-exchange of a guanine (G) residue with the queuine precursor 7-aminomethyl-7-deazaguanine (PreQ1) at position 34 (anticodon wobble position) in tRNAs with GU(N) anticodons (tRNA-Asp, -Asn, -His and -Tyr). Catalysis occurs through a double-displacement mechanism. The nucleophile active site attacks the C1' of nucleotide 34 to detach the guanine base from the RNA, forming a covalent enzyme-RNA intermediate. The proton acceptor active site deprotonates the incoming PreQ1, allowing a nucleophilic attack on the C1' of the ribose to form the product. After dissociation, two additional enzymatic reactions on the tRNA convert PreQ1 to queuine (Q), resulting in the hypermodified nucleoside queuosine (7-(((4,5-cis-dihydroxy-2-cyclopenten-1-yl)amino)methyl)-7-deazaguanosine). The chain is Queuine tRNA-ribosyltransferase from Herpetosiphon aurantiacus (strain ATCC 23779 / DSM 785 / 114-95).